Here is a 309-residue protein sequence, read N- to C-terminus: Aspartate carbamoyltransferase catalytic subunit (309 aa).

2 residues coordinate carbamoyl phosphate: Arg-48 and Thr-49. An L-aspartate-binding site is contributed by Lys-76. The carbamoyl phosphate site is built by Arg-98, His-128, and Gln-131. Residues Arg-161 and Arg-211 each contribute to the L-aspartate site. Positions 250 and 251 each coordinate carbamoyl phosphate.

It belongs to the aspartate/ornithine carbamoyltransferase superfamily. ATCase family. Heterododecamer (2C3:3R2) of six catalytic PyrB chains organized as two trimers (C3), and six regulatory PyrI chains organized as three dimers (R2).

It carries out the reaction carbamoyl phosphate + L-aspartate = N-carbamoyl-L-aspartate + phosphate + H(+). It functions in the pathway pyrimidine metabolism; UMP biosynthesis via de novo pathway; (S)-dihydroorotate from bicarbonate: step 2/3. Its function is as follows. Catalyzes the condensation of carbamoyl phosphate and aspartate to form carbamoyl aspartate and inorganic phosphate, the committed step in the de novo pyrimidine nucleotide biosynthesis pathway. This Oceanobacillus iheyensis (strain DSM 14371 / CIP 107618 / JCM 11309 / KCTC 3954 / HTE831) protein is Aspartate carbamoyltransferase catalytic subunit.